Consider the following 507-residue polypeptide: Maturase K (507 aa).

The protein belongs to the intron maturase 2 family. MatK subfamily.

The protein localises to the plastid. The protein resides in the chloroplast. Its function is as follows. Usually encoded in the trnK tRNA gene intron. Probably assists in splicing its own and other chloroplast group II introns. The polypeptide is Maturase K (Lens ervoides (Beaded lentil)).